The primary structure comprises 132 residues: MKTVKVNIVTPDGPVYDADIEMVSVRAESGDLGILPGHIPTVAPLKIGAVRLKKDGQTEMVAVSGGFVEVRPDHVTILAQAAETAEGIDKERAEAARQRAQERLNSQSDDTDIRRAELALQRALNRLDVAGK.

The segment covering 88-102 has biased composition (basic and acidic residues); sequence IDKERAEAARQRAQE. The disordered stretch occupies residues 88–112; the sequence is IDKERAEAARQRAQERLNSQSDDTD.

This sequence belongs to the ATPase epsilon chain family. F-type ATPases have 2 components, CF(1) - the catalytic core - and CF(0) - the membrane proton channel. CF(1) has five subunits: alpha(3), beta(3), gamma(1), delta(1), epsilon(1). CF(0) has three main subunits: a, b and c. The F(1)F(0) complex interacts with SpoIIIJ and YqjG; YqgA is found in the same complex.

The protein resides in the cell membrane. Produces ATP from ADP in the presence of a proton gradient across the membrane. The polypeptide is ATP synthase epsilon chain (atpC) (Bacillus subtilis (strain 168)).